Here is a 438-residue protein sequence, read N- to C-terminus: Acyl-CoA dehydrogenase apdG (438 aa).

The protein belongs to the acyl-CoA dehydrogenase family. The cofactor is FAD.

It participates in secondary metabolite biosynthesis. Functionally, acyl-CoA dehydrogenase; part of the gene cluster that mediates the biosynthesis of aspyridones. The polyketide-amino acid backbone preaspyridone A is first assembled by the PKS-NRPS hybrid apdA. The assembly of preaspyridone A is initiated by loading of malonyl-CoA onto apdA, followed by decarboxylation to yield the acetyl starter unit. The growing polyketide chain then elongates into a tetraketide. The adpA PKS module catalyzes three Claisen condensations, as well as beta-keto processing and methylation. Alpha-methylation step during polyketide synthesis is a prerequisite and a key checkpoint for chain transfer between PKS and NRPS modules. The downstream NRPS module contains the condensation (C), adenylation (A), and thiolation (T) domains and catalyzes the incorporation of tyrosine via the formation of the L-tyrosinyl-thioester and the amide linkage between L-tyrosinyl-thioester and the tetraketide. The bimodular assembly line is terminated with a reductase (R) domain that facilitates formation and release of the tetramic acid product. Because apdA lacks a designated enoylreductase (ER) domain, the required activity is provided the enoyl reductase apdC. ApdC appears to operate with different stereoselectivity in different PKS cycle. Combined with apdC, apdA is proposed to synthesize preaspyridone A via about 20 enzymatic steps. A number of oxidative steps performed successively by the cytochrome P450 monooxygenases apdE and apdB are required for the conversion of preaspyridone A to aspyridone A. The cytochrome P450 monooxygenase apdE is responsible for the oxidative dephenylation of preaspyridone A. Finally, the predicted FAD-dependent monooxygenase apdD and the acyl-CoA dehydrogenase apdG may be involved in the transformation of aspyridone A into aspyridone B. The sequence is that of Acyl-CoA dehydrogenase apdG from Emericella nidulans (strain FGSC A4 / ATCC 38163 / CBS 112.46 / NRRL 194 / M139) (Aspergillus nidulans).